A 1256-amino-acid chain; its full sequence is Octopamine receptor beta-3R (1256 aa).

At 1–143 (MSGVNVADLL…LDLSLLLLKG (143 aa)) the chain is on the extracellular side. N-linked (GlcNAc...) asparagine glycosylation is found at Asn36, Asn113, and Asn117. A helical transmembrane segment spans residues 144-164 (FIFSSIILAAVLGNALVIISV). Topologically, residues 165–171 (QRNRKLR) are cytoplasmic. Residues 172 to 192 (VITNYFVVSLAMADMLVALCA) form a helical membrane-spanning segment. Over 193 to 213 (MTFNASVELSGGKWMFGPFMC) the chain is Extracellular. Asn196 carries N-linked (GlcNAc...) asparagine glycosylation. A helical transmembrane segment spans residues 214–236 (NVYNSLDVYFSTASILHLCCISV). Residues 237–258 (DRYYAIVRPLEYPLNMTHKTVC) are Cytoplasmic-facing. Residues 259-279 (FMLANVWILPALISFTPIFLG) form a helical membrane-spanning segment. Residues 280–305 (WYTTEEHLREISLHPDQCSFVVNKAY) lie on the Extracellular side of the membrane. A helical transmembrane segment spans residues 306–326 (ALISSSVSFWIPGIVMLVMYW). Residues 327–1169 (RIFKEAIRQR…WKAEHKAART (843 aa)) lie on the Cytoplasmic side of the membrane. 5 disordered regions span residues 377 to 427 (AREE…DLRD), 480 to 512 (ELDK…ESTA), 665 to 698 (LSHS…NKPD), 751 to 774 (GESP…EPSG), and 1087 to 1117 (DTTV…SSTR). Positions 396–406 (TDEDDDRDECD) are enriched in acidic residues. Residues 489–498 (NGPQQQLSLT) are compositionally biased toward polar residues. Positions 757-770 (PATPPPSLSPPELP) are enriched in pro residues. The helical transmembrane segment at 1170–1190 (LGIIMGVFLLCWLPFFLWYVI) threads the bilayer. Topologically, residues 1191-1202 (TSLCGPACPCPD) are extracellular. The chain crosses the membrane as a helical span at residues 1203–1223 (VLVVVLFWIGYFNSTLNPLIY). The Cytoplasmic segment spans residues 1224-1256 (AYFNRDFREAFRNTLECVLPCLEKRNPYNAYYV).

The protein belongs to the G-protein coupled receptor 1 family. As to expression, in the adult, expressed in the inferior and superior protocerebrum, the posterior lateral protocerebrum, the deutocerebrum, the surface of the subesophageal ganglion, the lateral cell body region, the cortical layer of the ventral nerve cord and the optic lobe medulla of the central nervous system (CNS). Also expressed in the nurse cells and follicle cells of the egg chambers in the ovary at oogenic stages 1-10, and spermatogonia and spermatocytes in the testis. Expressed ubiquitously in the embryonic CNS. In larvae, expressed in the ventral cortical layer of the ventral nerve cord, the cortical layer of the brain lobes, salivary glands, midgut, imaginal disks and developing reproductive organs. Expressed in the larval prothoracic gland with weak expression in other regions of the ring gland.

It is found in the cell membrane. Autoreceptor for octopamine, which is a neurotransmitter, neurohormone, and neuromodulator in invertebrates. Probably also acts as a receptor for tyramine during ecdysone biosynthesis. Required for the biosynthesis of the steroid hormone ecdysone which is necessary for metamorphosis. Involved in activation of prothoracicotropic hormone and insulin-like peptide signaling which is required for the expression of ecdysone biosynthetic genes. This is Octopamine receptor beta-3R from Drosophila melanogaster (Fruit fly).